A 202-amino-acid polypeptide reads, in one-letter code: uncharacterized protein (202 aa).

Residues 164–202 (DTDSEQESDQESDQDSDQESEESDQESDQDSDQDSEGSE) are disordered. A compositionally biased stretch (acidic residues) spans 165-202 (TDSEQESDQESDQDSDQESEESDQESDQDSDQDSEGSE).

This is an uncharacterized protein from Acanthamoeba polyphaga mimivirus (APMV).